The chain runs to 250 residues: 5-oxoprolinase subunit A (250 aa).

Belongs to the LamB/PxpA family. Forms a complex composed of PxpA, PxpB and PxpC.

It carries out the reaction 5-oxo-L-proline + ATP + 2 H2O = L-glutamate + ADP + phosphate + H(+). Its function is as follows. Catalyzes the cleavage of 5-oxoproline to form L-glutamate coupled to the hydrolysis of ATP to ADP and inorganic phosphate. This Staphylococcus aureus (strain MRSA252) protein is 5-oxoprolinase subunit A.